Consider the following 147-residue polypeptide: Diaminohydroxyphosphoribosylamino-pyrimidine deaminase (147 aa).

The CMP/dCMP-type deaminase domain maps to 1-122 (MKDRFYMTRA…LYLRKKGISV (122 aa)). His-50 serves as a coordination point for Zn(2+). Residue Glu-52 is the Proton donor of the active site. Zn(2+)-binding residues include Cys-75 and Cys-84.

It belongs to the cytidine and deoxycytidylate deaminase family. Requires Zn(2+) as cofactor.

The enzyme catalyses 2,5-diamino-6-hydroxy-4-(5-phosphoribosylamino)-pyrimidine + H2O + H(+) = 5-amino-6-(5-phospho-D-ribosylamino)uracil + NH4(+). Its pathway is cofactor biosynthesis; riboflavin biosynthesis; 5-amino-6-(D-ribitylamino)uracil from GTP: step 2/4. In Buchnera aphidicola subsp. Schizaphis graminum (strain Sg), this protein is Diaminohydroxyphosphoribosylamino-pyrimidine deaminase (ribD1).